The chain runs to 156 residues: Small ribosomal subunit protein uS7 (156 aa).

This sequence belongs to the universal ribosomal protein uS7 family. In terms of assembly, part of the 30S ribosomal subunit. Contacts proteins S9 and S11.

Functionally, one of the primary rRNA binding proteins, it binds directly to 16S rRNA where it nucleates assembly of the head domain of the 30S subunit. Is located at the subunit interface close to the decoding center, probably blocks exit of the E-site tRNA. The polypeptide is Small ribosomal subunit protein uS7 (Glaesserella parasuis serovar 5 (strain SH0165) (Haemophilus parasuis)).